Reading from the N-terminus, the 95-residue chain is Class II hydrophobin 3 (95 aa).

The signal sequence occupies residues 1 to 16; it reads MKLLAVAALLAGAAIA. 4 disulfide bridges follow: C28/C77, C38/C68, C39/C51, and C78/C89.

Belongs to the cerato-ulmin hydrophobin family.

Its subcellular location is the secreted. It localises to the cell wall. Its function is as follows. Aerial growth, conidiation, and dispersal of filamentous fungi in the environment rely upon a capability of their secreting small amphipathic proteins called hydrophobins (HPBs) with low sequence identity. Class I can self-assemble into an outermost layer of rodlet bundles on aerial cell surfaces, conferring cellular hydrophobicity that supports fungal growth, development and dispersal; whereas Class II form highly ordered films at water-air interfaces through intermolecular interactions but contribute nothing to the rodlet structure. Hyd3 plays a neglectable role in hyphal growth and asexual development and does not seem involved in cellular hydrophobicity, conidial adhesion, stress tolerance nor insect pathogenicity. The polypeptide is Class II hydrophobin 3 (Metarhizium robertsii (strain ARSEF 23 / ATCC MYA-3075) (Metarhizium anisopliae (strain ARSEF 23))).